We begin with the raw amino-acid sequence, 1889 residues long: Protein TIC 214 (1889 aa).

The next 6 helical transmembrane spans lie at 11–31 (LISLYMTIINSVVMVGLYYGF), 67–87 (FIAGQLMMFISIYYVPLHLAL), 88–108 (GKPHTITVLALPYLLFHFFWN), 127–147 (LSIQCVFLNNLIIQLFNHFIL), 175–195 (VGWLIGHILLMKWVGLVLVWI), and 224–244 (IFSILLFITCVYYLGRIPSPI). The segment covering 255–265 (PEEVGESEEER) has biased composition (acidic residues). Disordered stretches follow at residues 255–303 (PEEV…PSKE) and 1610–1633 (SNQEKDVEEDYDKSDKKKRRKKKQ). Residues 279 to 293 (NQKQGTEENTSSSLF) show a composition bias toward polar residues.

It belongs to the TIC214 family. Part of the Tic complex.

It localises to the plastid. The protein resides in the chloroplast inner membrane. Its function is as follows. Involved in protein precursor import into chloroplasts. May be part of an intermediate translocation complex acting as a protein-conducting channel at the inner envelope. The polypeptide is Protein TIC 214 (Gossypium barbadense (Sea Island cotton)).